Here is a 603-residue protein sequence, read N- to C-terminus: Probable NOT transcription complex subunit VIP2 (603 aa).

Polar residues-rich tracts occupy residues 1–28 (MQGT…NNLS) and 36–70 (NLPS…PGYS). 4 disordered regions span residues 1 to 70 (MQGT…PGYS), 212 to 242 (NDGS…LGSL), 306 to 335 (AGFN…GGVS), and 355 to 377 (SSHS…PLNS). Polar residues predominate over residues 312–335 (GTYSSNRPQQQLQHAPSVSSGGVS).

The protein belongs to the CNOT2/3/5 family. As to quaternary structure, binds to VIP1. Interacts with Agrobacterium tumefaciens VirE2. Forms a complex made of Agrobacterium VirE2, VIP1, VIP2 and single-stranded DNA (ssDNA).

It is found in the nucleus. Functionally, transcriptional regulator required for Agrobacterium-mediated stable genetic transformation by T-DNA integration in host genome, but not for T-DNA transient expression. The chain is Probable NOT transcription complex subunit VIP2 (VIP2) from Nicotiana benthamiana.